A 266-amino-acid chain; its full sequence is HLA class II histocompatibility antigen, DR beta 3 chain (266 aa).

Positions 1-29 are cleaved as a signal peptide; it reads MVCLKLPGGSSLAALTVTLMVLSSRLAFA. The beta-1 stretch occupies residues 30-124; sequence GDTRPRFLEL…GESFTVQRRV (95 aa). Topologically, residues 30 to 227 are extracellular; the sequence is GDTRPRFLEL…RARSESAQSK (198 aa). Disulfide bonds link Cys-44/Cys-108 and Cys-146/Cys-202. Asn-48 carries an N-linked (GlcNAc...) asparagine glycan. Residues 125 to 227 form a beta-2 region; that stretch reads HPQVTVYPAK…RARSESAQSK (103 aa). The Ig-like C1-type domain maps to 126–214; the sequence is PQVTVYPAKT…EHPSVTSALT (89 aa). Residues 228 to 248 traverse the membrane as a helical segment; sequence MLSGVGGFVLGLLFLGAGLFI. Over 249-266 the chain is Cytoplasmic; that stretch reads YFRNQKGHSGLQPTGFLS.

The protein belongs to the MHC class II family. In terms of assembly, heterotrimer that consists of an alpha chain HLA-DRA, a beta chain HLA-DRB1 and a peptide (peptide-MHCII). Newly synthesized alpha and beta chains forms a heterodimer (MHCII) that associates with the CD74/invariant chain (Ii) in the endoplasmic reticulum (ER). Ii is a trimer composed of three subunits and each subunit interacts with one MHCII dimer, blocking the peptide-binding cleft. As a result, MHCII molecules cannot bind peptides present in the ER. The complex of MHCII and CD74/Ii is transported in vesicles from ER to Golgi to lysosomes, where it encounters antigenic peptides generated via proteolysis of endocytosed antigens. MHCII dimers are dissociated from CD74/Ii by the combined action of proteolysis and HLA-DM. Lysosomal enzymes such as cathepsin, degrade CD74/Ii leaving a 24 amino acid remnant called class II-associated Ii or CLIP. Interacts (via the peptide binding cleft) with CLIP; this interaction inhibits antigen peptide binding before entry in the endosomal compartment. The displacement of CLIP and replacement by a high affinity peptide in lysosomes is performed by HLA-DM heterodimer. HLA-DM catalyzes CLIP dissociation from MHCII, stabilizes empty MHCII and mediates the selection of high affinity peptides. Interacts with HLA-DM heterodimer; this interaction is direct. Interacts with TCR (via CDR3). Interacts (via beta-2 domain) with CD4 coreceptor (via Ig-like V-type domain); this interaction is of exceptionally low affinity yet necessary for optimal recognition of antigenic peptides. In terms of processing, ubiquitinated by MARCHF1 and MARCHF8 at Lys-254 leading to sorting into the endosome system and down-regulation of MHC class II. Expressed in professional APCs: monocyte/macrophages, dendritic cells and B cells (at protein level).

It is found in the cell membrane. It localises to the endoplasmic reticulum membrane. The protein localises to the lysosome membrane. Its subcellular location is the late endosome membrane. The protein resides in the autolysosome membrane. Its function is as follows. A beta chain of antigen-presenting major histocompatibility complex class II (MHCII) molecule. In complex with the alpha chain HLA-DRA, displays antigenic peptides on professional antigen presenting cells (APCs) for recognition by alpha-beta T cell receptor (TCR) on HLA-DRB3-restricted CD4-positive T cells. This guides antigen-specific T-helper effector functions, both antibody-mediated immune response and macrophage activation, to ultimately eliminate the infectious agents and transformed cells. Typically presents extracellular peptide antigens of 10 to 30 amino acids that arise from proteolysis of endocytosed antigens in lysosomes. In the tumor microenvironment, presents antigenic peptides that are primarily generated in tumor-resident APCs likely via phagocytosis of apoptotic tumor cells or macropinocytosis of secreted tumor proteins. Presents peptides derived from intracellular proteins that are trapped in autolysosomes after macroautophagy, a mechanism especially relevant for T cell selection in the thymus and central immune tolerance. The selection of the immunodominant epitopes follows two processing modes: 'bind first, cut/trim later' for pathogen-derived antigenic peptides and 'cut first, bind later' for autoantigens/self-peptides. The anchor residue at position 1 of the peptide N-terminus, usually a large hydrophobic residue, is essential for high affinity interaction with MHCII molecules. Functionally, ALLELE DRB3*01:01: Exclusively presents several immunogenic epitopes derived from C.tetani neurotoxin tetX, playing a significant role in immune recognition and long-term protection. Presents viral epitopes derived from HHV-6B U11, TRX2/U56 and U85 antigens to polyfunctional CD4-positive T cells with cytotoxic activity implicated in control of HHV-6B infection. In terms of biological role, ALLELE DRB3*02:02 Exclusively presents several immunogenic epitopes derived from C.tetani neurotoxin tetX, playing a significant role in immune recognition and long-term protection. Upon EBV infection, presents to CD4-positive T cells latent antigen EBNA2 (PRSPTVFYNIPPMPLPPSQL) and lytic antigen BZLF1 (LTAYHVSTAPTGSWF) peptides, driving oligoclonal expansion and selection of virus-specific memory T cell subsets with cytotoxic potential to directly eliminate virus-infected B cells. Presents viral epitopes derived from HHV-6B U11, gB/U39 and gH/U48 antigens to polyfunctional CD4-positive T cells with cytotoxic activity implicated in control of HHV-6B infection. Plays a minor role in CD4-positive T cell immune response against Dengue virus by presenting conserved peptides from capsid and non-structural NS3 proteins. Displays peptides derived from IAV matrix protein M, implying a role in protection against IAV infection. In the context of tumor immunesurveillance, may present to T-helper 1 cells an immunogenic epitope derived from tumor-associated antigen WT1 (KRYFKLSHLQMHSRKH), likely providing for effective antitumor immunity in a wide range of solid and hematological malignancies. Presents to Vbeta2-positive T-helper 1 cells specifically an immunodominant peptide derived from tumor antigen CTAG1A/NY-ESO-1(PGVLLKEFTVSGNILTIRLTAADHR) and confers protective memory response. In metastatic epithelial tumors, presents to intratumoral CD4-positive T cells a TP53 neoantigen (HYNYMCNSSCMGSMNRRPILTIITL) carrying G245S hotspot driver mutation and may mediate tumor regression. ALLELE DRB3*03:01: Presents a series of conserved peptides derived from the M.tuberculosis PPE family of proteins, in particular PPE29 and PPE33, known to be highly immunogenic. Presents immunogenic epitopes derived from C.tetani neurotoxin tetX, playing a role in immune recognition and long-term protection. Displays immunodominant viral peptides from HCV non-structural protein NS2, as part of a broad range T-helper response to resolve infection. In Homo sapiens (Human), this protein is HLA class II histocompatibility antigen, DR beta 3 chain (HLA-DRB3).